Consider the following 244-residue polypeptide: Phosphoadenosine 5'-phosphosulfate reductase (244 aa).

Cys239 functions as the Nucleophile; cysteine thiosulfonate intermediate in the catalytic mechanism.

This sequence belongs to the PAPS reductase family. CysH subfamily.

It localises to the cytoplasm. It carries out the reaction [thioredoxin]-disulfide + sulfite + adenosine 3',5'-bisphosphate + 2 H(+) = [thioredoxin]-dithiol + 3'-phosphoadenylyl sulfate. The protein operates within sulfur metabolism; hydrogen sulfide biosynthesis; sulfite from sulfate: step 3/3. In terms of biological role, catalyzes the formation of sulfite from phosphoadenosine 5'-phosphosulfate (PAPS) using thioredoxin as an electron donor. This chain is Phosphoadenosine 5'-phosphosulfate reductase, found in Escherichia coli O6:K15:H31 (strain 536 / UPEC).